The sequence spans 355 residues: Peptide chain release factor 1 (355 aa).

Residue glutamine 233 is modified to N5-methylglutamine.

It belongs to the prokaryotic/mitochondrial release factor family. In terms of processing, methylated by PrmC. Methylation increases the termination efficiency of RF1.

The protein resides in the cytoplasm. Its function is as follows. Peptide chain release factor 1 directs the termination of translation in response to the peptide chain termination codons UAG and UAA. This is Peptide chain release factor 1 from Amoebophilus asiaticus (strain 5a2).